The following is a 407-amino-acid chain: BMP-like protein unc-129 (407 aa).

The N-terminal stretch at 1 to 18 (MRRLPIVLLLSVFSIANC) is a signal peptide. N-linked (GlcNAc...) asparagine glycans are attached at residues Asn-27, Asn-42, and Asn-211. The disordered stretch occupies residues 252-283 (DDREPIKRKNGKKNSLSEEISSEDVWQGFGEE). Asn-395 is a glycosylation site (N-linked (GlcNAc...) asparagine).

The protein belongs to the TGF-beta family. In terms of assembly, interacts with netrin receptor unc-5; the interaction is direct.

It is found in the secreted. Its subcellular location is the extracellular space. In terms of biological role, required for the migration of axonal growth-cones and distal tip cells (DTC) along the dorsal-ventral axis of the body wall. Acts cell nonautonomously and independently of the classical daf-4, sma-6 or daf-1 TGFbeta receptor signaling. During axon migration, facilitates long-range repulsive guidance of unc-6/netrin by enhancing unc-5-unc-40 signaling at the expense of unc-5 alone signaling, probably through direct interaction with receptor unc-5. Involved in cell-cell contact formation in sensory rays in the developing male tail, via a pathway involving plx-2 and mab-20/semaphorin-2A. The polypeptide is BMP-like protein unc-129 (Caenorhabditis elegans).